The primary structure comprises 178 residues: Nicotinamide-nucleotide adenylyltransferase (178 aa).

Belongs to the archaeal NMN adenylyltransferase family.

The protein localises to the cytoplasm. The enzyme catalyses beta-nicotinamide D-ribonucleotide + ATP + H(+) = diphosphate + NAD(+). Its pathway is cofactor biosynthesis; NAD(+) biosynthesis; NAD(+) from nicotinamide D-ribonucleotide: step 1/1. This chain is Nicotinamide-nucleotide adenylyltransferase, found in Pyrobaculum neutrophilum (strain DSM 2338 / JCM 9278 / NBRC 100436 / V24Sta) (Thermoproteus neutrophilus).